A 170-amino-acid polypeptide reads, in one-letter code: Sec-independent protein translocase protein TATA, chloroplastic (170 aa).

A chloroplast-targeting transit peptide spans 1 to 61 (MGIPVVVPVA…GGSGGDLAAV (61 aa)). The Lumenal portion of the chain corresponds to 62-84 (AASVAARPRRAGSGGGGALGCKC). A helical transmembrane segment spans residues 85–105 (LFGLGVPELAVIAGVAALVFG). Topologically, residues 106-170 (PKQLPEIGRS…LEASSSKESA (65 aa)) are stromal. The span at 130–139 (FETELKKEPG) shows a compositional bias: basic and acidic residues. Residues 130–170 (FETELKKEPGEGGDQPPPATPTAVSGGEEKGLEASSSKESA) are disordered.

The protein belongs to the TatA/E family. As to quaternary structure, in thylakoid membranes, TATC and TATB form a large receptor complex, containing about eight TATC-TATB pairs, which binds the precursor protein. Twin arginine signal peptide promotes pH-triggered docking of TATA oligomers to TATC-TATB receptor complex, inducing a conformational switch of TATA that results in activation of the translocase. TATA dissociates from TATC-TATB upon completion of translocation.

It localises to the plastid. It is found in the chloroplast thylakoid membrane. In terms of biological role, part of the twin-arginine translocation (Tat) system that transports large folded proteins containing a characteristic twin-arginine motif in their signal peptide across the thylakoid membrane. Involved in delta pH-dependent protein transport required for chloroplast development, especially thylakoid membrane formation. TATC and TATB mediate precursor recognition, whereas TATA facilitates translocation. The polypeptide is Sec-independent protein translocase protein TATA, chloroplastic (Zea mays (Maize)).